The sequence spans 77 residues: Conotoxin PnMEKL-04 (77 aa).

The N-terminal stretch at 1 to 19 is a signal peptide; sequence MEKLTILLLVAAVLMSTQA. Residues 20-45 constitute a propeptide that is removed on maturation; it reads LPQGGGENRLKENIKFLLKRKTAADR. Disulfide bonds link cysteine 51–cysteine 65, cysteine 58–cysteine 69, and cysteine 64–cysteine 73.

The protein belongs to the conotoxin O2 superfamily. As to expression, expressed by the venom duct.

Its subcellular location is the secreted. The sequence is that of Conotoxin PnMEKL-04 from Conus pennaceus (Feathered cone).